A 30-amino-acid polypeptide reads, in one-letter code: Sillucin (30 aa).

Cystine bridges form between cysteine 2–cysteine 7, cysteine 12–cysteine 24, cysteine 13–cysteine 30, and cysteine 14–cysteine 21.

Its subcellular location is the secreted. Functionally, sillucin is an antimicrobial agent produced by the thermophilic fungus Rhizomucor pusillus in liquid culture; it is effective against Gram-positive bacteria at the level of RNA metabolism. In Rhizomucor pusillus, this protein is Sillucin.